Reading from the N-terminus, the 367-residue chain is Phosphoribosylaminoimidazole-succinocarboxamide synthase (367 aa).

The protein belongs to the SAICAR synthetase family.

It catalyses the reaction 5-amino-1-(5-phospho-D-ribosyl)imidazole-4-carboxylate + L-aspartate + ATP = (2S)-2-[5-amino-1-(5-phospho-beta-D-ribosyl)imidazole-4-carboxamido]succinate + ADP + phosphate + 2 H(+). Its pathway is purine metabolism; IMP biosynthesis via de novo pathway; 5-amino-1-(5-phospho-D-ribosyl)imidazole-4-carboxamide from 5-amino-1-(5-phospho-D-ribosyl)imidazole-4-carboxylate: step 1/2. This is Phosphoribosylaminoimidazole-succinocarboxamide synthase from Aeromonas salmonicida (strain A449).